A 205-amino-acid chain; its full sequence is Small ribosomal subunit protein uS4 (205 aa).

In terms of domain architecture, S4 RNA-binding spans 94-157 (SRLDTVVYRM…KQIPLIQESV (64 aa)).

Belongs to the universal ribosomal protein uS4 family. As to quaternary structure, part of the 30S ribosomal subunit. Contacts protein S5. The interaction surface between S4 and S5 is involved in control of translational fidelity.

Its function is as follows. One of the primary rRNA binding proteins, it binds directly to 16S rRNA where it nucleates assembly of the body of the 30S subunit. With S5 and S12 plays an important role in translational accuracy. The chain is Small ribosomal subunit protein uS4 from Rickettsia conorii (strain ATCC VR-613 / Malish 7).